Here is a 316-residue protein sequence, read N- to C-terminus: Delta(1)-pyrroline-2-carboxylate reductase (316 aa).

The protein belongs to the ornithine cyclodeaminase/mu-crystallin family. Homodimer.

The catalysed reaction is L-proline + NAD(+) = 1-pyrroline-2-carboxylate + NADH + H(+). It carries out the reaction L-proline + NADP(+) = 1-pyrroline-2-carboxylate + NADPH + H(+). Its function is as follows. Catalyzes the reduction of Delta(1)-pyrroline-2-carboxylate (Pyr2C) to L-proline, using preferentially NADPH over NADH as the electron donor. Together with LhpH, is involved in a metabolic pathway that converts trans-3-hydroxy-L-proline (t3LHyp) to L-proline. To a much lesser extent, can also reduce Delta(1)-piperideine-2-carboxylate (Pip2C) to L-pipecolate in vitro; however, this activity has likely no physiological significance in vivo since C.psychrerythraea probably possesses no ability to metabolize D-lysine via the L-pipecolate pathway. Does not show ornithine cyclodeaminase (OCD) activity. This is Delta(1)-pyrroline-2-carboxylate reductase from Colwellia psychrerythraea (strain 34H / ATCC BAA-681) (Vibrio psychroerythus).